Reading from the N-terminus, the 534-residue chain is CTP synthase (534 aa).

Residues 1–267 (MTKYIFVTGG…DQIVCDHLKL (267 aa)) are amidoligase domain. Position 13 (serine 13) interacts with CTP. UTP is bound at residue serine 13. Residue 14-19 (SIGKGI) participates in ATP binding. Tyrosine 54 is a binding site for L-glutamine. Aspartate 71 lines the ATP pocket. The Mg(2+) site is built by aspartate 71 and glutamate 141. CTP is bound by residues 148–150 (DIE), 188–193 (KTKPTQ), and lysine 224. Residues 188 to 193 (KTKPTQ) and lysine 224 contribute to the UTP site. Positions 292-534 (KIALVGKYVE…FVTAAVENMK (243 aa)) constitute a Glutamine amidotransferase type-1 domain. L-glutamine is bound at residue glycine 354. Cysteine 381 serves as the catalytic Nucleophile; for glutamine hydrolysis. Residues 382–385 (LGMQ), glutamate 405, and arginine 463 each bind L-glutamine. Active-site residues include histidine 508 and glutamate 510.

The protein belongs to the CTP synthase family. As to quaternary structure, homotetramer.

It catalyses the reaction UTP + L-glutamine + ATP + H2O = CTP + L-glutamate + ADP + phosphate + 2 H(+). The enzyme catalyses L-glutamine + H2O = L-glutamate + NH4(+). The catalysed reaction is UTP + NH4(+) + ATP = CTP + ADP + phosphate + 2 H(+). The protein operates within pyrimidine metabolism; CTP biosynthesis via de novo pathway; CTP from UDP: step 2/2. With respect to regulation, allosterically activated by GTP, when glutamine is the substrate; GTP has no effect on the reaction when ammonia is the substrate. The allosteric effector GTP functions by stabilizing the protein conformation that binds the tetrahedral intermediate(s) formed during glutamine hydrolysis. Inhibited by the product CTP, via allosteric rather than competitive inhibition. Its function is as follows. Catalyzes the ATP-dependent amination of UTP to CTP with either L-glutamine or ammonia as the source of nitrogen. Regulates intracellular CTP levels through interactions with the four ribonucleotide triphosphates. The chain is CTP synthase from Streptococcus agalactiae serotype V (strain ATCC BAA-611 / 2603 V/R).